Consider the following 191-residue polypeptide: uncharacterized protein (191 aa).

The region spanning 87–184 (EFDSALIFHY…RIAITFRQMG (98 aa)) is the Fe2OG dioxygenase domain.

This is an uncharacterized protein from Acanthamoeba polyphaga mimivirus (APMV).